Consider the following 625-residue polypeptide: Exonuclease mut-7 homolog (625 aa).

Phosphoserine is present on S17. Residues 410-602 form the 3'-5' exonuclease domain; that stretch reads LIIVNKADEF…IYNTLIERVS (193 aa).

The protein belongs to the mut-7 family. In terms of assembly, interacts with AGO1; the interaction is not RNA dependent. It depends on Mg(2+) as a cofactor.

In terms of biological role, possesses 3'-5' exoribonuclease activity. Required for 3'-end trimming of AGO1-bound miRNAs, in particular multiple-isoform miRNAs, which represents a critical step in miRNA maturation. This is Exonuclease mut-7 homolog (Nbr) from Drosophila melanogaster (Fruit fly).